We begin with the raw amino-acid sequence, 452 residues long: Keratin, type II cytoskeletal 80 (452 aa).

The head stretch occupies residues 1 to 82 (MAYRSCVVGF…DPAVQQQKNQ (82 aa)). A Phosphoserine modification is found at S45. The interval 82-118 (QEKEEMKVLNDKFASLIGKVQALEQRNQLLETRWGFL) is coil 1A. The region spanning 83–394 (EKEEMKVLND…KLMEGEESRM (312 aa)) is the IF rod domain. The tract at residues 119–135 (QGQGSATFDLSHHYETF) is linker 1. The tract at residues 136–227 (QGRLQEELRK…TVYEQELKDL (92 aa)) is coil 1B. A linker 12 region spans residues 228-251 (TAQVKDVSVTVGLDSRCHIDLSGI). The interval 252 to 390 (VEEVKAQYDA…ATYHKLMEGE (139 aa)) is coil 2. The interval 391–452 (ESRMDLPSTT…YLSQESEASE (62 aa)) is tail. 2 stretches are compositionally biased toward polar residues: residues 411–421 (TTASKSGLSKT) and 443–452 (YLSQESEASE). The interval 411-452 (TTASKSGLSKTPSRKKKNRGGPVIKITEMSEKYLSQESEASE) is disordered.

It belongs to the intermediate filament family. In terms of assembly, heterotetramer of two type I and two type II keratins.

In Rattus norvegicus (Rat), this protein is Keratin, type II cytoskeletal 80 (Krt80).